We begin with the raw amino-acid sequence, 542 residues long: MPTYRFNYLRFNKLCVSFFRSKFDKRPFASQKFPENLVPDNSSNDANSQPEEVSSKKPWYVDEKHNLFPKKAHFDAVALPPIPKGAPNFLADVLNLLKKKYYATDLSFVNSPADSFWCDSDLILLASCNCGSEVVSATNGLLRLLKQKNVGPVNVDGLTSASRRKILERRMRKRSNLSNRQLNTSENNWTCLSIENFGISIHVITKNFREYYKLDNIEHVKDETLYSDLEHGKQSRVSLTSKSTPDNSLPPNFINNHSNVFRRSFHTCNFSLKSAASLYCDTQDILLNVNSQNLTSTLEKYKKMHLQNPNNFSLDFTLSIFERLRKDSSLQLTTKDINTLFSTIALSPTKLSMASKHSKNLVSERMLYLSLMYKSLVDLKTIDSFSLKLLFLKFMICSCMVKGESNFFLDNRIFLLERIMNRYGIPMTIDTFLLMQFILAKSNRWSEVWRRWDNLRKAGVVFNERLYNHVYLLAFESKNERVINYVLTNIFEDMVSQSPPIPASKLMATSLKKCVQSLPEKYAHSFPSVRNYIAKMENSMTH.

A mitochondrion-targeting transit peptide spans 1 to 28 (MPTYRFNYLRFNKLCVSFFRSKFDKRPF). Positions 34–56 (PENLVPDNSSNDANSQPEEVSSK) are disordered. Over residues 39 to 52 (PDNSSNDANSQPEE) the composition is skewed to polar residues.

It belongs to the ATP25 family.

Its subcellular location is the mitochondrion inner membrane. In terms of biological role, mRNA stabilization factor specific for the 0.95 kb oli1 mRNA. Also involved in oli1 ring formation. This is ATPase synthesis protein 25, mitochondrial (atp25) from Schizosaccharomyces pombe (strain 972 / ATCC 24843) (Fission yeast).